Consider the following 142-residue polypeptide: Nucleoside diphosphate kinase (142 aa).

ATP-binding residues include K11, F59, R87, T93, R104, and N114. The active-site Pros-phosphohistidine intermediate is H117.

It belongs to the NDK family. In terms of assembly, homotetramer. It depends on Mg(2+) as a cofactor.

The protein resides in the cytoplasm. The enzyme catalyses a 2'-deoxyribonucleoside 5'-diphosphate + ATP = a 2'-deoxyribonucleoside 5'-triphosphate + ADP. It catalyses the reaction a ribonucleoside 5'-diphosphate + ATP = a ribonucleoside 5'-triphosphate + ADP. Its function is as follows. Major role in the synthesis of nucleoside triphosphates other than ATP. The ATP gamma phosphate is transferred to the NDP beta phosphate via a ping-pong mechanism, using a phosphorylated active-site intermediate. The chain is Nucleoside diphosphate kinase from Dechloromonas aromatica (strain RCB).